The following is a 350-amino-acid chain: Phenylalanine--tRNA ligase alpha subunit (350 aa).

Glu259 lines the Mg(2+) pocket.

The protein belongs to the class-II aminoacyl-tRNA synthetase family. Phe-tRNA synthetase alpha subunit type 1 subfamily. As to quaternary structure, tetramer of two alpha and two beta subunits. It depends on Mg(2+) as a cofactor.

It is found in the cytoplasm. The catalysed reaction is tRNA(Phe) + L-phenylalanine + ATP = L-phenylalanyl-tRNA(Phe) + AMP + diphosphate + H(+). In Rickettsia prowazekii (strain Madrid E), this protein is Phenylalanine--tRNA ligase alpha subunit (pheS).